Consider the following 83-residue polypeptide: MKILIFIIASFMLIGVECKEGYPMGRNGCKIPCAINDNICKVECQAKWKQSDGYCYSWGLSCYCTNLLEDAEVWDSSNNKCVG.

The N-terminal stretch at 1-18 (MKILIFIIASFMLIGVEC) is a signal peptide. One can recognise an LCN-type CS-alpha/beta domain in the interval 19-82 (KEGYPMGRNG…VWDSSNNKCV (64 aa)). Disulfide bonds link Cys-29–Cys-81, Cys-33–Cys-55, Cys-40–Cys-62, and Cys-44–Cys-64.

This sequence belongs to the long (4 C-C) scorpion toxin superfamily. Sodium channel inhibitor family. Beta subfamily. Expressed by the venom gland.

The protein localises to the secreted. Functionally, beta toxins bind voltage-independently at site-4 of sodium channels (Nav) and shift the voltage of activation toward more negative potentials thereby affecting sodium channel activation and promoting spontaneous and repetitive firing. This Rhopalurus junceus (Caribbean blue scorpion) protein is Putative beta-neurotoxin RjAa15f.